Reading from the N-terminus, the 385-residue chain is Heterogeneous nuclear ribonucleoprotein 87F (385 aa).

RRM domains lie at 24 to 101 and 115 to 192; these read RKLF…RAVP and KKLF…KAIA. Disordered regions lie at residues 192-289 and 305-385; these read AKQD…WNGG and GNGG…NRRY. Gly residues-rich tracts occupy residues 199–289 and 305–317; these read QGGG…WNGG and GNGG…GGFG. A compositionally biased stretch (polar residues) spans 319 to 336; the sequence is EYQQSYGGGPQRNSNFGN. 2 stretches are compositionally biased toward gly residues: residues 344–362 and 369–385; these read QGGG…GQGF and TGGG…NRRY.

The protein resides in the nucleus. It is found in the cytoplasm. Functionally, this protein is a component of ribonucleosomes. Could be needed to organize a concentration gradient of a dorsalizing morphogen (Dm) originating in the germinal vesicle. This is Heterogeneous nuclear ribonucleoprotein 87F (Hrb87F) from Drosophila melanogaster (Fruit fly).